Consider the following 471-residue polypeptide: Replication factor C large subunit (471 aa).

44–51 (GSPGIGKT) provides a ligand contact to ATP. The span at 422–431 (RTDAAVDHSE) shows a compositional bias: basic and acidic residues. The segment at 422–471 (RTDAAVDHSEGAFAGAVREDNTDEDSAADETTDGDEDTGADSQRGLDEFF) is disordered. Residues 442-460 (NTDEDSAADETTDGDEDTG) are compositionally biased toward acidic residues.

It belongs to the activator 1 small subunits family. RfcL subfamily. In terms of assembly, heteromultimer composed of small subunits (RfcS) and large subunits (RfcL).

Its function is as follows. Part of the RFC clamp loader complex which loads the PCNA sliding clamp onto DNA. This chain is Replication factor C large subunit, found in Halobacterium salinarum (strain ATCC 29341 / DSM 671 / R1).